Consider the following 274-residue polypeptide: MLSVAARSGPFAPVLSATSRGVAGALRPLVQATVPATPEXPVLDLKRPXLSRESLSGQAVRRPLVASVGLNVPASVCYSHTDVKVPDFYDYRRLEVLDSTKSSRESSEARKGFSYLVTAVTTVGVAYAAKNVVTQFISSMSASADVLAMAKIEINLSDIPEGKNMAFKWRGKPLFVRHRTQKEIEEEAAVELSQLRDPQHDLDRVKKPEWVILIGVCTHLGCVPIANAGDFGGYYCPCHGSHYDASGRIRLGPAPLNLEVPPYEFTGDDVVVVG.

Residues serine 79–serine 103 are Mitochondrial matrix-facing. A helical membrane pass occupies residues arginine 104–methionine 140. At serine 141–glycine 274 the chain is on the mitochondrial intermembrane side. The Rieske domain maps to glutamate 187 to valine 272. Residues cysteine 217, histidine 219, cysteine 236, histidine 239, and serine 241 each contribute to the [2Fe-2S] cluster site. The cysteines at positions 222 and 238 are disulfide-linked.

The protein belongs to the Rieske iron-sulfur protein family. As to quaternary structure, component of the ubiquinol-cytochrome c oxidoreductase (cytochrome b-c1 complex, complex III, CIII), a multisubunit enzyme composed of 11 subunits. The complex is composed of 3 respiratory subunits cytochrome b, cytochrome c1 and Rieske protein UQCRFS1, 2 core protein subunits UQCRC1/QCR1 and UQCRC2/QCR2, and 6 low-molecular weight protein subunits UQCRH/QCR6, UQCRB/QCR7, UQCRQ/QCR8, UQCR10/QCR9, UQCR11/QCR10 and subunit 9, the cleavage product of Rieske protein UQCRFS1. The complex exists as an obligatory dimer and forms supercomplexes (SCs) in the inner mitochondrial membrane with NADH-ubiquinone oxidoreductase (complex I, CI) and cytochrome c oxidase (complex IV, CIV), resulting in different assemblies (supercomplex SCI(1)III(2)IV(1) and megacomplex MCI(2)III(2)IV(2)). Incorporation of the Rieske protein UQCRFS1 is the penultimate step in complex III assembly. Interacts with TTC19, which is involved in the clearance of UQCRFS1 fragments. In terms of assembly, component of the ubiquinol-cytochrome c oxidoreductase (cytochrome b-c1 complex, complex III, CIII). Subunit 9 corresponds to the mitochondrial targeting sequence (MTS) of Rieske protein UQCRFS1. It is retained after processing and incorporated inside complex III, where it remains bound to the complex and localizes between the 2 core subunits UQCRC1/QCR1 and UQCRC2/QCR2. It depends on [2Fe-2S] cluster as a cofactor. In terms of processing, proteolytic processing is necessary for the correct insertion of UQCRFS1 in the complex III dimer. Several fragments are generated during UQCRFS1 insertion, most probably due to the endogenous matrix-processing peptidase (MPP) activity of the 2 core protein subunits UQCRC1/QCR1 and UQCRC2/QCR2, which are homologous to the 2 mitochondrial-processing peptidase (MPP) subunits beta-MPP and alpha-MPP respectively. The action of the protease is also necessary for the clearance of the UQCRFS1 fragments.

It localises to the mitochondrion inner membrane. The enzyme catalyses a quinol + 2 Fe(III)-[cytochrome c](out) = a quinone + 2 Fe(II)-[cytochrome c](out) + 2 H(+)(out). Its function is as follows. Component of the ubiquinol-cytochrome c oxidoreductase, a multisubunit transmembrane complex that is part of the mitochondrial electron transport chain which drives oxidative phosphorylation. The respiratory chain contains 3 multisubunit complexes succinate dehydrogenase (complex II, CII), ubiquinol-cytochrome c oxidoreductase (cytochrome b-c1 complex, complex III, CIII) and cytochrome c oxidase (complex IV, CIV), that cooperate to transfer electrons derived from NADH and succinate to molecular oxygen, creating an electrochemical gradient over the inner membrane that drives transmembrane transport and the ATP synthase. The cytochrome b-c1 complex catalyzes electron transfer from ubiquinol to cytochrome c, linking this redox reaction to translocation of protons across the mitochondrial inner membrane, with protons being carried across the membrane as hydrogens on the quinol. In the process called Q cycle, 2 protons are consumed from the matrix, 4 protons are released into the intermembrane space and 2 electrons are passed to cytochrome c. The Rieske protein is a catalytic core subunit containing a [2Fe-2S] iron-sulfur cluster. It cycles between 2 conformational states during catalysis to transfer electrons from the quinol bound in the Q(0) site in cytochrome b to cytochrome c1. Incorporation of UQCRFS1 is the penultimate step in complex III assembly. Component of the ubiquinol-cytochrome c oxidoreductase (cytochrome b-c1 complex, complex III, CIII). UQCRFS1 undergoes proteolytic processing once it is incorporated in the complex III dimer. One of the fragments, called subunit 9, corresponds to its mitochondrial targeting sequence (MTS). The proteolytic processing is necessary for the correct insertion of UQCRFS1 in the complex III dimer, but the persistence of UQCRFS1-derived fragments may prevent newly imported UQCRFS1 to be processed and assembled into complex III and is detrimental for the complex III structure and function. This chain is Cytochrome b-c1 complex subunit Rieske, mitochondrial (UQCRFS1), found in Chlorocebus aethiops (Green monkey).